We begin with the raw amino-acid sequence, 476 residues long: Glucose-1-phosphate adenylyltransferase (476 aa).

Alpha-D-glucose 1-phosphate contacts are provided by residues Tyr114, Gly179, Glu194–Lys195, and Ser212.

Belongs to the bacterial/plant glucose-1-phosphate adenylyltransferase family. In terms of assembly, homotetramer.

It catalyses the reaction alpha-D-glucose 1-phosphate + ATP + H(+) = ADP-alpha-D-glucose + diphosphate. The protein operates within glycan biosynthesis; glycogen biosynthesis. Involved in the biosynthesis of ADP-glucose, a building block required for the elongation reactions to produce glycogen. Catalyzes the reaction between ATP and alpha-D-glucose 1-phosphate (G1P) to produce pyrophosphate and ADP-Glc. The polypeptide is Glucose-1-phosphate adenylyltransferase (Yersinia pestis bv. Antiqua (strain Antiqua)).